Here is a 118-residue protein sequence, read N- to C-terminus: Small ribosomal subunit protein uS13 (118 aa).

Positions 94–118 (SLPLRGQRTKTNARTRKGPRKPIKK) are disordered.

The protein belongs to the universal ribosomal protein uS13 family. Part of the 30S ribosomal subunit. Forms a loose heterodimer with protein S19. Forms two bridges to the 50S subunit in the 70S ribosome.

In terms of biological role, located at the top of the head of the 30S subunit, it contacts several helices of the 16S rRNA. In the 70S ribosome it contacts the 23S rRNA (bridge B1a) and protein L5 of the 50S subunit (bridge B1b), connecting the 2 subunits; these bridges are implicated in subunit movement. Contacts the tRNAs in the A and P-sites. The polypeptide is Small ribosomal subunit protein uS13 (Vibrio cholerae serotype O1 (strain ATCC 39315 / El Tor Inaba N16961)).